A 203-amino-acid chain; its full sequence is uncharacterized protein (203 aa).

A signal peptide spans 1-20 (MDELILPILILLFLVFVAYF).

This is an uncharacterized protein from Pasteurella multocida (strain Pm70).